Here is a 350-residue protein sequence, read N- to C-terminus: MIKVLIVEDSPVVRELLSHILHSDPQIRVVGVAESGEEALKEVVRLRPDLITMDVNLPRMDGFETTRRIMEEIPTPIIIVSAAWVSTEVEKTFRALEAGALAVLEKPSIAARDYDIRARDLIRAVKAMSEVKVIRRWSRSPRIEPAPPASGEPDIGKITKRFEVVAMGASTGGPTVLKQILSDLPDNFTIPILIVQHMTQGFIPGFVDWLSRAANYPVSVAVHGEEIRPGHAYVAPDGLHMGVNALGKIILTKGEPENGLCPSVSYLFRSVYRAYGENAVGVLLTGMGKDGAYELKVMKDCGMITIAQNKETSVVYGMPGEAIGMNAASYVLPPEKIARVLVKLAGSVAP.

The 119-residue stretch at 3–121 (KVLIVEDSPV…RDYDIRARDL (119 aa)) folds into the Response regulatory domain. Position 54 is a 4-aspartylphosphate (D54). A CheB-type methylesterase domain is found at 148–342 (PASGEPDIGK…PPEKIARVLV (195 aa)). Residues S170, H197, and D290 contribute to the active site.

This sequence belongs to the CheB family. In terms of processing, phosphorylated by CheA. Phosphorylation of the N-terminal regulatory domain activates the methylesterase activity.

The protein resides in the cytoplasm. It catalyses the reaction [protein]-L-glutamate 5-O-methyl ester + H2O = L-glutamyl-[protein] + methanol + H(+). It carries out the reaction L-glutaminyl-[protein] + H2O = L-glutamyl-[protein] + NH4(+). In terms of biological role, involved in chemotaxis. Part of a chemotaxis signal transduction system that modulates chemotaxis in response to various stimuli. Catalyzes the demethylation of specific methylglutamate residues introduced into the chemoreceptors (methyl-accepting chemotaxis proteins or MCP) by CheR. Also mediates the irreversible deamidation of specific glutamine residues to glutamic acid. In Syntrophus aciditrophicus (strain SB), this protein is Protein-glutamate methylesterase/protein-glutamine glutaminase 1.